We begin with the raw amino-acid sequence, 462 residues long: tRNA-2-methylthio-N(6)-dimethylallyladenosine synthase (462 aa).

The 121-residue stretch at 18–138 (RKVFVKTYGC…LPNALARVRS (121 aa)) folds into the MTTase N-terminal domain. Residues Cys-27, Cys-63, Cys-101, Cys-179, Cys-183, and Cys-186 each coordinate [4Fe-4S] cluster. The 233-residue stretch at 165–397 (RKRGVSAFLT…QALLSEQQYA (233 aa)) folds into the Radical SAM core domain. Residues 400 to 462 (DSMIGREMDV…TNSLIAQKLA (63 aa)) enclose the TRAM domain.

Belongs to the methylthiotransferase family. MiaB subfamily. Monomer. [4Fe-4S] cluster is required as a cofactor.

Its subcellular location is the cytoplasm. It carries out the reaction N(6)-dimethylallyladenosine(37) in tRNA + (sulfur carrier)-SH + AH2 + 2 S-adenosyl-L-methionine = 2-methylsulfanyl-N(6)-dimethylallyladenosine(37) in tRNA + (sulfur carrier)-H + 5'-deoxyadenosine + L-methionine + A + S-adenosyl-L-homocysteine + 2 H(+). Its function is as follows. Catalyzes the methylthiolation of N6-(dimethylallyl)adenosine (i(6)A), leading to the formation of 2-methylthio-N6-(dimethylallyl)adenosine (ms(2)i(6)A) at position 37 in tRNAs that read codons beginning with uridine. The sequence is that of tRNA-2-methylthio-N(6)-dimethylallyladenosine synthase from Brucella anthropi (strain ATCC 49188 / DSM 6882 / CCUG 24695 / JCM 21032 / LMG 3331 / NBRC 15819 / NCTC 12168 / Alc 37) (Ochrobactrum anthropi).